The chain runs to 99 residues: MQITVEFSGGLETAFDGNKKHVLDVPEGSSVNWLLHHMVETLMPDHKREEGKNIFLQDESVRPGVLVLINDSDWELEGEDQYILQPRDVIIFASTLHGG.

At glycine 99 the chain carries 1-thioglycine. Glycine 99 participates in a covalent cross-link: Glycyl lysine isopeptide (Gly-Lys) (interchain with K-? in acceptor proteins).

The protein belongs to the URM1 family. C-terminal thiocarboxylation occurs in 2 steps, it is first acyl-adenylated (-COAMP) via the hesA/moeB/thiF part of UBA4, then thiocarboxylated (-COSH) via the rhodanese domain of UBA4.

It is found in the cytoplasm. It participates in tRNA modification; 5-methoxycarbonylmethyl-2-thiouridine-tRNA biosynthesis. Its function is as follows. Acts as a sulfur carrier required for 2-thiolation of mcm(5)S(2)U at tRNA wobble positions of cytosolic tRNA(Lys), tRNA(Glu) and tRNA(Gln). Serves as sulfur donor in tRNA 2-thiolation reaction by being thiocarboxylated (-COSH) at its C-terminus by the MOCS3 homolog UBA4. The sulfur is then transferred to tRNA to form 2-thiolation of mcm(5)S(2)U. Prior mcm(5) tRNA modification by the elongator complex is required for 2-thiolation. Also acts as a ubiquitin-like protein (UBL) that is covalently conjugated via an isopeptide bond to lysine residues of target proteins such as AHP1. The thiocarboxylated form serves as substrate for conjugation and oxidative stress specifically induces the formation of UBL-protein conjugates. The chain is Ubiquitin-related modifier 1 from Yarrowia lipolytica (strain CLIB 122 / E 150) (Yeast).